The following is a 118-amino-acid chain: MSAPAQPPAEGTEGAAPGGGPPGPPPNTTSNRRLQQTQAQVEEVVDIMRVNVDKVLERDQKLSELDDRADALQAGASVFESSAAKLKRKYWWKNCKMMIMLGAICAIIVVVIVIYIFT.

Low complexity predominate over residues 1–15; sequence MSAPAQPPAEGTEGA. The tract at residues 1 to 38 is disordered; the sequence is MSAPAQPPAEGTEGAAPGGGPPGPPPNTTSNRRLQQTQ. The Cytoplasmic portion of the chain corresponds to 1–96; the sequence is MSAPAQPPAE…KRKYWWKNCK (96 aa). Residues 28–38 are compositionally biased toward polar residues; it reads TTSNRRLQQTQ. A v-SNARE coiled-coil homology domain is found at 33–93; that stretch reads RLQQTQAQVE…AKLKRKYWWK (61 aa). At S63 the chain carries Phosphoserine. Residues 97–116 traverse the membrane as a helical; Anchor for type IV membrane protein segment; that stretch reads MMIMLGAICAIIVVVIVIYI. Over 117–118 the chain is Vesicular; sequence FT.

This sequence belongs to the synaptobrevin family. In terms of assembly, interacts with VAPA and VAPB. In terms of processing, (Microbial infection) Targeted and hydrolyzed by C.botulinum neurotoxin type D (BoNT/D, botD) which hydrolyzes the 61-Lys-|-Leu-62 bond and inhibits neurotransmitter release. This is a poor substrate for BoNT/D, high concentrations are required to cleave it in vitro. (Microbial infection) Targeted and hydrolyzed by C.botulinum neurotoxin type F (BoNT/F, botF) which hydrolyzes the 60-Gln-|-Lys-61 bond and inhibits neurotransmitter release. In terms of tissue distribution, expressed in brain and spleen (at protein level). Isoform 1 expressed at very high level in brain. Even higher level found in spinal cord. Isoform 3 expressed in kidney, spleen and liver. Isoforms 2 and 3 expressed in osteoblasts of trabecular bone. Also expressed in heart.

The protein localises to the cytoplasmic vesicle. The protein resides in the secretory vesicle. It is found in the synaptic vesicle membrane. Its subcellular location is the synapse. It localises to the synaptosome. The protein localises to the cytoplasmic vesicle membrane. The protein resides in the mitochondrion outer membrane. In terms of biological role, involved in the targeting and/or fusion of transport vesicles to their target membrane. This Rattus norvegicus (Rat) protein is Vesicle-associated membrane protein 1 (Vamp1).